Reading from the N-terminus, the 111-residue chain is Disintegrin lebein-1-alpha (111 aa).

The signal sequence occupies residues 1-20 (MIQVLLVTICLAVFPYQGSS). Residues 21 to 47 (IILESGNVNDYEIVYPKKVTVLPTGAM) constitute a propeptide that is removed on maturation. The region spanning 47 to 111 (MNSGNPCCDP…SDCPRNPYKD (65 aa)) is the Disintegrin domain. 4 disulfide bridges follow: Cys53–Cys76, Cys67–Cys73, Cys72–Cys97, and Cys85–Cys104. Residues 89–91 (RGD) carry the Cell attachment site motif.

The protein belongs to the disintegrin family. Dimeric disintegrin subfamily. In terms of assembly, heterodimer with subunit beta; disulfide-linked. Expressed by the venom gland.

It is found in the secreted. In terms of biological role, strongly inhibits ADP-induced platelet aggregation on human platelet-rich plasma. Also avidly binds to the laminin-binding beta-1 integrins (alpha-3/beta-1, alpha-6/beta-1, and alpha-7/beta-1) in an RGD-independent manner. The chain is Disintegrin lebein-1-alpha from Macrovipera lebetinus (Levantine viper).